A 160-amino-acid chain; its full sequence is Troponin C, skeletal muscle (160 aa).

The residue at position 2 (threonine 2) is an N-acetylthreonine. EF-hand domains follow at residues 15-50 (EMIA…LGQT), 51-86 (PTKE…QMKE), 91-126 (KSEE…SGEH), and 127-160 (VTDE…EGVQ). 19 residues coordinate Ca(2+): aspartate 28, aspartate 30, aspartate 34, glutamate 39, aspartate 64, aspartate 66, serine 68, threonine 70, glutamate 75, aspartate 104, asparagine 106, aspartate 108, tyrosine 110, glutamate 115, aspartate 140, asparagine 142, aspartate 144, arginine 146, and glutamate 151.

This sequence belongs to the troponin C family.

Functionally, troponin is the central regulatory protein of striated muscle contraction. Tn consists of three components: Tn-I which is the inhibitor of actomyosin ATPase, Tn-T which contains the binding site for tropomyosin and Tn-C. The binding of calcium to Tn-C abolishes the inhibitory action of Tn on actin filaments. The chain is Troponin C, skeletal muscle (TNNC2) from Oryctolagus cuniculus (Rabbit).